The following is a 379-amino-acid chain: Beta sliding clamp (379 aa).

It belongs to the beta sliding clamp family. In terms of assembly, forms a ring-shaped head-to-tail homodimer around DNA which binds and tethers DNA polymerases and other proteins to the DNA. The DNA replisome complex has a single clamp-loading complex (3 tau and 1 each of delta, delta', psi and chi subunits) which binds 3 Pol III cores (1 core on the leading strand and 2 on the lagging strand) each with a beta sliding clamp dimer. Additional proteins in the replisome are other copies of gamma, psi and chi, Ssb, DNA helicase and RNA primase.

The protein resides in the cytoplasm. Confers DNA tethering and processivity to DNA polymerases and other proteins. Acts as a clamp, forming a ring around DNA (a reaction catalyzed by the clamp-loading complex) which diffuses in an ATP-independent manner freely and bidirectionally along dsDNA. Initially characterized for its ability to contact the catalytic subunit of DNA polymerase III (Pol III), a complex, multichain enzyme responsible for most of the replicative synthesis in bacteria; Pol III exhibits 3'-5' exonuclease proofreading activity. The beta chain is required for initiation of replication as well as for processivity of DNA replication. The sequence is that of Beta sliding clamp (dnaN) from Rickettsia bellii (strain RML369-C).